The following is a 147-amino-acid chain: Putative cystatin-9-like protein CST9LP1 (147 aa).

The first 28 residues, 1–28 (MWSLPPSRALSCAPLLLLFSFQFLVTYA), serve as a signal peptide directing secretion. A disulfide bridge connects residues Cys-98 and Cys-108. Asn-117 and Asn-139 each carry an N-linked (GlcNAc...) asparagine glycan. The cysteines at positions 122 and 142 are disulfide-linked.

The protein belongs to the cystatin family.

It localises to the secreted. The polypeptide is Putative cystatin-9-like protein CST9LP1 (CST9LP1) (Homo sapiens (Human)).